The following is a 170-amino-acid chain: Adenine phosphoribosyltransferase (170 aa).

It belongs to the purine/pyrimidine phosphoribosyltransferase family. In terms of assembly, homodimer.

It localises to the cytoplasm. It carries out the reaction AMP + diphosphate = 5-phospho-alpha-D-ribose 1-diphosphate + adenine. It functions in the pathway purine metabolism; AMP biosynthesis via salvage pathway; AMP from adenine: step 1/1. In terms of biological role, catalyzes a salvage reaction resulting in the formation of AMP, that is energically less costly than de novo synthesis. This chain is Adenine phosphoribosyltransferase, found in Streptococcus sanguinis (strain SK36).